The chain runs to 301 residues: Thioredoxin-related transmembrane protein 2-A (301 aa).

An N-terminal signal peptide occupies residues 1–19 (MSLIRGLISTIYYLPKIYK). Over 20–111 (WFYRPYYFLS…VVLFFRVDLR (92 aa)) the chain is Extracellular. A helical transmembrane segment spans residues 112-132 (FGLLYLTLCVVFLITCKPPAY). The 148-residue stretch at 122–269 (VFLITCKPPA…IFQKYKKFSK (148 aa)) folds into the Thioredoxin domain. The Cytoplasmic portion of the chain corresponds to 133 to 301 (MGPENIKYFR…EEDSESKKDK (169 aa)). The interval 268–301 (SKGEKPEEPQPVLEEESESPLEEEEEDSESKKDK) is disordered. Residues 280–295 (LEEESESPLEEEEEDS) show a composition bias toward acidic residues. Positions 298–301 (KKDK) match the Di-lysine motif motif.

Monomer. Homodimer; disulfide-linked. Occurs in both reduced and oxidized monomeric form. Oxidative conditions increase homodimerization.

The protein localises to the endoplasmic reticulum membrane. Its subcellular location is the mitochondrion membrane. Endoplasmic reticulum and mitochondria-associated protein that probably functions as a regulator of cellular redox state and thereby regulates protein post-translational modification, protein folding and mitochondrial activity. In Danio rerio (Zebrafish), this protein is Thioredoxin-related transmembrane protein 2-A.